We begin with the raw amino-acid sequence, 109 residues long: Large ribosomal subunit protein uL24 (109 aa).

This sequence belongs to the universal ribosomal protein uL24 family. In terms of assembly, part of the 50S ribosomal subunit.

One of two assembly initiator proteins, it binds directly to the 5'-end of the 23S rRNA, where it nucleates assembly of the 50S subunit. Functionally, one of the proteins that surrounds the polypeptide exit tunnel on the outside of the subunit. This Rickettsia africae (strain ESF-5) protein is Large ribosomal subunit protein uL24.